Consider the following 113-residue polypeptide: Protein INCREASED RESISTANCE TO MYZUS PERSICAE 1 (113 aa).

Residues 56 to 100 form an FLZ-type zinc finger; that stretch reads DFLKTCSLCNRSLCHHRDIYMYRGNNAFCSLECREKQIKLDEKKA.

Belongs to the FLZ family. In terms of assembly, interacts with KIN10 and KIN11 via its FLZ-type zinc finger domain. Interacts with KINB3 via its N-terminal part. Interacts with GEBP.

Its subcellular location is the nucleus. It localises to the cytoplasm. Functionally, may act as an adapter to facilitate the interaction of SnRK1 complex with effector proteins, conferring tissue- and stimulus-type specific differences in the SnRK1 regulation pathway. This chain is Protein INCREASED RESISTANCE TO MYZUS PERSICAE 1, found in Arabidopsis thaliana (Mouse-ear cress).